Reading from the N-terminus, the 356-residue chain is 11-beta-hydroxysteroid dehydrogenase (356 aa).

The helical; Signal-anchor for type II membrane protein transmembrane segment at Leu10 to Phe30 threads the bilayer. The short motif at Pro13–Ser26 is the Proline-knob element. Residue Gly54–Arg85 participates in NADP(+) binding. Ser184 lines the substrate pocket. Catalysis depends on Tyr197, which acts as the Proton acceptor. NADP(+) contacts are provided by residues Tyr197–Lys201 and Lys201.

It belongs to the short-chain dehydrogenases/reductases (SDR) family. In terms of tissue distribution, expressed in megagametophytes (at protein level).

It localises to the lipid droplet. Its subcellular location is the membrane. The catalysed reaction is an 11beta-hydroxysteroid + NADP(+) = an 11-oxosteroid + NADPH + H(+). The enzyme catalyses corticosterone + NADP(+) = 11-dehydrocorticosterone + NADPH + H(+). It carries out the reaction 17beta-estradiol + NADP(+) = estrone + NADPH + H(+). In terms of biological role, has dehydrogenase activity against corticosterone (11 beta-hydroxysteroid) and estradiol (17 beta-hydroxysteroid) in the presence of NADP(+). May be involved in signal transduction regulated by various sterols. This is 11-beta-hydroxysteroid dehydrogenase from Pinus massoniana (Chinese red pine).